Here is a 243-residue protein sequence, read N- to C-terminus: Homeobox protein goosecoid isoform A (243 aa).

The segment at residues 148 to 207 is a DNA-binding region (homeobox); it reads KRRHRTIFTDEQLEALENLFQETKYPDVGTREQLARRVHLREEKVEVWFKNRRAKWRRQK. Residues 201 to 243 are disordered; sequence AKWRRQKRSSSEESENAQKWNKSSKNSAEKADEQVKSDLDSDS. Polar residues predominate over residues 217-226; it reads AQKWNKSSKN. Over residues 227–243 the composition is skewed to basic and acidic residues; sequence SAEKADEQVKSDLDSDS.

This sequence belongs to the paired homeobox family. Bicoid subfamily. As to expression, at the start of gastrulation, it is found in a patch of cells encompassing 60 degrees of arc on the dorsal marginal zone.

The protein resides in the nucleus. Its function is as follows. Plays a central role in executing Spemann's organizer phenomenon (the dorsal blastopore lip of the early Xenopus laevis gastrula can organize a complete secondary body axis when transplanted to another embryo). The chain is Homeobox protein goosecoid isoform A (gsc-a) from Xenopus laevis (African clawed frog).